Reading from the N-terminus, the 457-residue chain is Argininosuccinate lyase (457 aa).

This sequence belongs to the lyase 1 family. Argininosuccinate lyase subfamily.

Its subcellular location is the cytoplasm. It catalyses the reaction 2-(N(omega)-L-arginino)succinate = fumarate + L-arginine. Its pathway is amino-acid biosynthesis; L-arginine biosynthesis; L-arginine from L-ornithine and carbamoyl phosphate: step 3/3. This is Argininosuccinate lyase from Haemophilus influenzae (strain PittEE).